A 434-amino-acid polypeptide reads, in one-letter code: Glutamyl-tRNA reductase 2 (434 aa).

Substrate is bound by residues 57–60 (TCNR), serine 113, 118–120 (DFE), and glutamine 124. Cysteine 58 acts as the Nucleophile in catalysis. 193-198 (GTGKIG) provides a ligand contact to NADP(+).

It belongs to the glutamyl-tRNA reductase family. As to quaternary structure, homodimer.

The catalysed reaction is (S)-4-amino-5-oxopentanoate + tRNA(Glu) + NADP(+) = L-glutamyl-tRNA(Glu) + NADPH + H(+). It functions in the pathway porphyrin-containing compound metabolism; protoporphyrin-IX biosynthesis; 5-aminolevulinate from L-glutamyl-tRNA(Glu): step 1/2. Its function is as follows. Catalyzes the NADPH-dependent reduction of glutamyl-tRNA(Glu) to glutamate 1-semialdehyde (GSA). The protein is Glutamyl-tRNA reductase 2 of Flavobacterium johnsoniae (strain ATCC 17061 / DSM 2064 / JCM 8514 / BCRC 14874 / CCUG 350202 / NBRC 14942 / NCIMB 11054 / UW101) (Cytophaga johnsonae).